Here is a 181-residue protein sequence, read N- to C-terminus: Inner membrane-spanning protein YciB (181 aa).

The next 5 membrane-spanning stretches (helical) occupy residues 22 to 42 (IYTATGALIVATAVQLILTYV), 50 to 70 (MQLITFIMVTVFGGMTIFLHD), 80 to 100 (IVYAVFAAGLIIAQILGRPII), 118 to 138 (INYAWILFFTACSIANLYVAF), and 148 to 168 (FKVFGLLGLTFIYTLLTGMYV).

This sequence belongs to the YciB family.

Its subcellular location is the cell inner membrane. In terms of biological role, plays a role in cell envelope biogenesis, maintenance of cell envelope integrity and membrane homeostasis. This chain is Inner membrane-spanning protein YciB, found in Aliivibrio salmonicida (strain LFI1238) (Vibrio salmonicida (strain LFI1238)).